The chain runs to 211 residues: Claudin-7 (211 aa).

Over 1–7 the chain is Cytoplasmic; the sequence is MANSGLQ. A helical transmembrane segment spans residues 8–28; sequence LLGFSMAMLGWVGLIASTAIP. The Extracellular portion of the chain corresponds to 29–81; it reads QWQMSSYAGDNIITAQAMYKGLWMECVTQSTGMMSCKMYDSVLALPAATQATR. A helical membrane pass occupies residues 82–102; the sequence is ALMIVSLVLGFLAMFVATMGM. The Cytoplasmic portion of the chain corresponds to 103–119; sequence KCTRCGGDDKVKKARIA. A helical membrane pass occupies residues 120–140; it reads MTGGIIFIVAGLAALVACSWI. Over 141–160 the chain is Extracellular; it reads GHQIVTDFYNPLTPMNIKYE. Residues 161–181 form a helical membrane-spanning segment; that stretch reads FGPAIFIGWAGSALVLLGGAL. The Cytoplasmic portion of the chain corresponds to 182–211; it reads LSCSCPGSESKAAYRAPRSYPKSNSSKEYV. The interval 210–211 is interactions with TJP1, TJP2 and TJP3; that stretch reads YV.

This sequence belongs to the claudin family. In terms of assembly, directly interacts with TJP1/ZO-1, TJP2/ZO-2 and TJP3/ZO-3. The phosphorylated form interacts with EPCAM. Post-translationally, phosphorylated.

The protein resides in the cell membrane. It is found in the basolateral cell membrane. Its subcellular location is the cell junction. The protein localises to the tight junction. Functionally, plays a major role in tight junction-specific obliteration of the intercellular space. This Rattus norvegicus (Rat) protein is Claudin-7 (Cldn7).